A 711-amino-acid polypeptide reads, in one-letter code: MND1-interacting protein 1 (711 aa).

A coiled-coil region spans residues 390 to 648; it reads EWAQKNAMQA…LEGSYDNEAN (259 aa). Disordered stretches follow at residues 552 to 571 and 602 to 622; these read EALAQMEEEQRSKEAAEGHN and RLKASSDSDSSHISNNAWKPK. Positions 602-611 are enriched in basic and acidic residues; it reads RLKASSDSDS. The RING-type zinc-finger motif lies at 653 to 697; sequence CIICMKDEVSVVFLPCAHQVVCGSCSDSFFASNNGGSKVTCPCCR.

Interacts (via C-terminal domain) with MND1 and HOP2. Interacts with XRI1 (via C-terminal domain).

This chain is MND1-interacting protein 1 (MIP1), found in Arabidopsis thaliana (Mouse-ear cress).